The chain runs to 154 residues: Large ribosomal subunit protein uL22c (154 aa).

Belongs to the universal ribosomal protein uL22 family. As to quaternary structure, part of the 50S ribosomal subunit.

Its subcellular location is the plastid. It localises to the chloroplast. In terms of biological role, this protein binds specifically to 23S rRNA. Its function is as follows. The globular domain of the protein is located near the polypeptide exit tunnel on the outside of the subunit, while an extended beta-hairpin is found that lines the wall of the exit tunnel in the center of the 70S ribosome. This chain is Large ribosomal subunit protein uL22c (rpl22), found in Jasminum nudiflorum (Winter jasmine).